A 453-amino-acid chain; its full sequence is Wall-associated protein (453 aa).

Residues 1–29 (MKMKRKLLSLVSVLTILLGAFWVTKIVKA) form the signal peptide. The interval 331 to 403 (GRASSRVKRQ…TASQTNVPTT (73 aa)) is disordered. Residues 342 to 403 (ETTTVTETTT…TASQTNVPTT (62 aa)) show a composition bias toward low complexity. The LPXTG sorting signal signature appears at 422–426 (LPSTG). T425 is modified (pentaglycyl murein peptidoglycan amidated threonine). The propeptide at 426-453 (GEQAGLLLTTVGLVIVAVAGVYFYRTRR) is removed by sortase.

The protein localises to the secreted. The protein resides in the cell wall. The chain is Wall-associated protein (wapA) from Streptococcus mutans serotype c (strain ATCC 700610 / UA159).